Consider the following 381-residue polypeptide: L-lactate dehydrogenase (381 aa).

One can recognise an FMN hydroxy acid dehydrogenase domain in the interval 1–380 (MIISASTDYR…SADSLVRELG (380 aa)). Tyrosine 24 serves as a coordination point for substrate. Serine 106 and glutamine 127 together coordinate FMN. Tyrosine 129 is a substrate binding site. Position 155 (threonine 155) interacts with FMN. Arginine 164 serves as a coordination point for substrate. Lysine 251 is a binding site for FMN. Histidine 275 acts as the Proton acceptor in catalysis. Arginine 278 contacts substrate. 306 to 330 (DSGIRTGLDVVRMIALGADSVLLGR) lines the FMN pocket.

Belongs to the FMN-dependent alpha-hydroxy acid dehydrogenase family. Homotetramer. It depends on FMN as a cofactor.

Its subcellular location is the cell inner membrane. The enzyme catalyses (S)-lactate + A = pyruvate + AH2. Catalyzes the conversion of L-lactate to pyruvate. Is coupled to the respiratory chain. In Pseudomonas aeruginosa (strain LESB58), this protein is L-lactate dehydrogenase.